The sequence spans 503 residues: ATP synthase subunit beta (503 aa).

Residue 157–164 coordinates ATP; sequence GGAGVGKT.

The protein belongs to the ATPase alpha/beta chains family. As to quaternary structure, F-type ATPases have 2 components, CF(1) - the catalytic core - and CF(0) - the membrane proton channel. CF(1) has five subunits: alpha(3), beta(3), gamma(1), delta(1), epsilon(1). CF(0) has three main subunits: a(1), b(2) and c(9-12). The alpha and beta chains form an alternating ring which encloses part of the gamma chain. CF(1) is attached to CF(0) by a central stalk formed by the gamma and epsilon chains, while a peripheral stalk is formed by the delta and b chains.

The protein localises to the cell inner membrane. It catalyses the reaction ATP + H2O + 4 H(+)(in) = ADP + phosphate + 5 H(+)(out). In terms of biological role, produces ATP from ADP in the presence of a proton gradient across the membrane. The catalytic sites are hosted primarily by the beta subunits. This is ATP synthase subunit beta from Flavobacterium johnsoniae (strain ATCC 17061 / DSM 2064 / JCM 8514 / BCRC 14874 / CCUG 350202 / NBRC 14942 / NCIMB 11054 / UW101) (Cytophaga johnsonae).